Reading from the N-terminus, the 837-residue chain is Mannosyl-oligosaccharide glucosidase (837 aa).

A compositionally biased stretch (basic residues) spans M1 to A10. At M1–R38 the chain is on the cytoplasmic side. The disordered stretch occupies residues M1 to S39. An Endoplasmic reticulum targeting motif is present at residues R3–R9. Positions R17–R33 are enriched in basic and acidic residues. The helical; Signal-anchor for type II membrane protein transmembrane segment at S39–G59 threads the bilayer. Residues R60–Y837 lie on the Lumenal side of the membrane. Residues S76–C137 are required for endoplasmic reticulum targeting. D583 acts as the Proton donor in catalysis. N-linked (GlcNAc...) asparagine glycosylation occurs at N657. E807 acts as the Proton acceptor in catalysis.

Belongs to the glycosyl hydrolase 63 family.

The protein localises to the endoplasmic reticulum membrane. The enzyme catalyses N(4)-(alpha-D-Glc-(1-&gt;2)-alpha-D-Glc-(1-&gt;3)-alpha-D-Glc-(1-&gt;3)-alpha-D-Man-(1-&gt;2)-alpha-D-Man-(1-&gt;2)-alpha-D-Man-(1-&gt;3)-[alpha-D-Man-(1-&gt;2)-alpha-D-Man-(1-&gt;3)-[alpha-D-Man-(1-&gt;2)-alpha-D-Man-(1-&gt;6)]-alpha-D-Man-(1-&gt;6)]-beta-D-Man-(1-&gt;4)-beta-D-GlcNAc-(1-&gt;4)-beta-D-GlcNAc)-L-asparaginyl-[protein] + H2O = N(4)-(alpha-D-Glc-(1-&gt;3)-alpha-D-Glc-(1-&gt;3)-alpha-D-Man-(1-&gt;2)-alpha-D-Man-(1-&gt;2)-alpha-D-Man-(1-&gt;3)-[alpha-D-Man-(1-&gt;2)-alpha-D-Man-(1-&gt;3)-[alpha-D-Man-(1-&gt;2)-alpha-D-Man-(1-&gt;6)]-alpha-D-Man-(1-&gt;6)]-beta-D-Man-(1-&gt;4)-beta-D-GlcNAc-(1-&gt;4)-beta-D-GlcNAc)-L-asparaginyl-[protein] + beta-D-glucose. It functions in the pathway glycan metabolism; N-glycan degradation. With respect to regulation, inhibited by 1-deoxynojirimycin (40% inhibition) and N,N-dimethyl-deoxynojirimycin (85% inhibition). Its function is as follows. In the context of N-glycan degradation, cleaves the distal alpha 1,2-linked glucose residue from the Glc(3)Man(9)GlcNAc(2) oligosaccharide precursor in a highly specific manner. The chain is Mannosyl-oligosaccharide glucosidase from Homo sapiens (Human).